Consider the following 308-residue polypeptide: Pantothenate synthetase (308 aa).

Met39–His46 lines the ATP pocket. His46 acts as the Proton donor in catalysis. Residue Gln71 coordinates (R)-pantoate. Gln71 contributes to the beta-alanine binding site. ATP is bound at residue Gly157–Asp160. Residue Gln163 participates in (R)-pantoate binding. ATP contacts are provided by residues Val186 and Met194–Arg197. The interval Ile286–Asn308 is disordered.

It belongs to the pantothenate synthetase family. Homodimer.

It is found in the cytoplasm. The catalysed reaction is (R)-pantoate + beta-alanine + ATP = (R)-pantothenate + AMP + diphosphate + H(+). Its pathway is cofactor biosynthesis; (R)-pantothenate biosynthesis; (R)-pantothenate from (R)-pantoate and beta-alanine: step 1/1. In terms of biological role, catalyzes the condensation of pantoate with beta-alanine in an ATP-dependent reaction via a pantoyl-adenylate intermediate. This is Pantothenate synthetase from Mycobacterium avium (strain 104).